A 479-amino-acid polypeptide reads, in one-letter code: Membrane-bound lytic murein transglycosylase F (479 aa).

The N-terminal stretch at 1 to 18 (MKGLFIRIVLAICLSLWA) is a signal peptide. The segment at 19-266 (IDMVFPWQQI…RIEEKYFNHL (248 aa)) is non-LT domain. The tract at residues 267 to 479 (NQFDYVDTRS…ISTQTQQEQR (213 aa)) is LT domain. Residue glutamate 311 is part of the active site.

This sequence in the N-terminal section; belongs to the bacterial solute-binding protein 3 family. In the C-terminal section; belongs to the transglycosylase Slt family.

It localises to the cell outer membrane. The catalysed reaction is Exolytic cleavage of the (1-&gt;4)-beta-glycosidic linkage between N-acetylmuramic acid (MurNAc) and N-acetylglucosamine (GlcNAc) residues in peptidoglycan, from either the reducing or the non-reducing ends of the peptidoglycan chains, with concomitant formation of a 1,6-anhydrobond in the MurNAc residue.. In terms of biological role, murein-degrading enzyme that degrades murein glycan strands and insoluble, high-molecular weight murein sacculi, with the concomitant formation of a 1,6-anhydromuramoyl product. Lytic transglycosylases (LTs) play an integral role in the metabolism of the peptidoglycan (PG) sacculus. Their lytic action creates space within the PG sacculus to allow for its expansion as well as for the insertion of various structures such as secretion systems and flagella. This chain is Membrane-bound lytic murein transglycosylase F, found in Histophilus somni (strain 2336) (Haemophilus somnus).